The primary structure comprises 192 residues: Protein CREG1 (192 aa).

Positions 1–18 (MVLLAFLCAAALAALARG) are cleaved as a signal peptide. N95, N133, and N166 each carry an N-linked (GlcNAc...) asparagine glycan.

Belongs to the CREG family.

It is found in the secreted. Its function is as follows. May contribute to the transcriptional control of cell growth and differentiation. This is Protein CREG1 (CREG1) from Gallus gallus (Chicken).